Here is a 104-residue protein sequence, read N- to C-terminus: A-type ATP synthase subunit F (104 aa).

The protein belongs to the V-ATPase F subunit family. In terms of assembly, has multiple subunits with at least A(3), B(3), C, D, E, F, H, I and proteolipid K(x).

The protein resides in the cell membrane. In terms of biological role, component of the A-type ATP synthase that produces ATP from ADP in the presence of a proton gradient across the membrane. This Thermoplasma acidophilum (strain ATCC 25905 / DSM 1728 / JCM 9062 / NBRC 15155 / AMRC-C165) protein is A-type ATP synthase subunit F.